The sequence spans 232 residues: Protein Mis18-alpha (232 aa).

Ser-36, Ser-39, and Ser-40 each carry phosphoserine. The Mis18 domain occupies 79-177 (PLVFLCSGCR…SVEAIESYVL (99 aa)). Zn(2+) is bound by residues Cys-84, Cys-87, Cys-140, and Cys-143. Lys-161 is covalently cross-linked (Glycyl lysine isopeptide (Lys-Gly) (interchain with G-Cter in SUMO2)). Ser-232 is modified (phosphoserine).

This sequence belongs to the mis18 family. Homodimer, and heterodimer with OIP5/MIS18B. Identified in a complex containing MIS18A, OIP5/MIS18B, MIS18BP1, RBBP7 and RBBP4.

It localises to the nucleus. The protein resides in the chromosome. It is found in the centromere. Functionally, required for recruitment of CENPA to centromeres and normal chromosome segregation during mitosis. The sequence is that of Protein Mis18-alpha (MIS18A) from Pan troglodytes (Chimpanzee).